The primary structure comprises 236 residues: Protein-L-isoaspartate O-methyltransferase 1 (236 aa).

Serine 85 is a catalytic residue.

It belongs to the methyltransferase superfamily. L-isoaspartyl/D-aspartyl protein methyltransferase family.

It is found in the cytoplasm. The catalysed reaction is [protein]-L-isoaspartate + S-adenosyl-L-methionine = [protein]-L-isoaspartate alpha-methyl ester + S-adenosyl-L-homocysteine. Functionally, catalyzes the methyl esterification of L-isoaspartyl residues in peptides and proteins that result from spontaneous decomposition of normal L-aspartyl and L-asparaginyl residues. It plays a role in the repair and/or degradation of damaged proteins. In Polaromonas sp. (strain JS666 / ATCC BAA-500), this protein is Protein-L-isoaspartate O-methyltransferase 1.